We begin with the raw amino-acid sequence, 1828 residues long: Dedicator of cytokinesis protein 2 (1828 aa).

One can recognise an SH3 domain in the interval 8 to 69 (DKERHGVAIY…PTSFIHLKEV (62 aa)). N6-acetyllysine is present on lysine 304. Positions 423–607 (RNDIYITLLQ…DVFSISTLVC (185 aa)) constitute a C2 DOCK-type domain. Phosphoserine occurs at positions 588 and 593. At lysine 738 the chain carries N6-acetyllysine. One can recognise a DOCKER domain in the interval 1210–1621 (YKDNNREEMY…VEKEYGVREM (412 aa)). The segment at 1652–1703 (SDCSTPSKVPAESFDLESAPPKTPKVEEEPISPGSTLPEVKLRRSKKRTKRS) is disordered. Serine 1683, serine 1704, serine 1729, and serine 1782 each carry phosphoserine.

The protein belongs to the DOCK family. In terms of assembly, homodimer. Interacts with RAC1 and RAC2. Interacts with CRKL and VAV. Interacts with CD3Z. In terms of tissue distribution, specifically expressed in hematopoietic cells.

It localises to the endomembrane system. The protein localises to the cytoplasm. Its subcellular location is the cytoskeleton. Its function is as follows. Involved in cytoskeletal rearrangements required for lymphocyte migration in response of chemokines. Activates RAC1 and RAC2, but not CDC42, by functioning as a guanine nucleotide exchange factor (GEF), which exchanges bound GDP for free GTP. May also participate in IL2 transcriptional activation via the activation of RAC2. This Mus musculus (Mouse) protein is Dedicator of cytokinesis protein 2 (Dock2).